The sequence spans 312 residues: Glyoxylate/hydroxypyruvate reductase A (312 aa).

Arginine 227 is an active-site residue. Histidine 275 acts as the Proton donor in catalysis.

It belongs to the D-isomer specific 2-hydroxyacid dehydrogenase family. GhrA subfamily.

Its subcellular location is the cytoplasm. It carries out the reaction glycolate + NADP(+) = glyoxylate + NADPH + H(+). It catalyses the reaction (R)-glycerate + NAD(+) = 3-hydroxypyruvate + NADH + H(+). The enzyme catalyses (R)-glycerate + NADP(+) = 3-hydroxypyruvate + NADPH + H(+). Its function is as follows. Catalyzes the NADPH-dependent reduction of glyoxylate and hydroxypyruvate into glycolate and glycerate, respectively. In Escherichia coli (strain UTI89 / UPEC), this protein is Glyoxylate/hydroxypyruvate reductase A.